The primary structure comprises 162 residues: EF-hand calcium-binding domain-containing protein 11 (162 aa).

EF-hand domains are found at residues 18-53, 91-126, and 127-162; these read SERR…LFGY, LYRN…VAPK, and LPAR…GQSK. Ca(2+) is bound by residues aspartate 140, aspartate 142, aspartate 144, histidine 146, and aspartate 151.

In Mus musculus (Mouse), this protein is EF-hand calcium-binding domain-containing protein 11 (Efcab11).